The following is a 173-amino-acid chain: ATP-dependent protease subunit HslV (173 aa).

The active site involves Thr-2. Na(+)-binding residues include Gly-158, Asp-161, and Ser-164.

The protein belongs to the peptidase T1B family. HslV subfamily. In terms of assembly, a double ring-shaped homohexamer of HslV is capped on each side by a ring-shaped HslU homohexamer. The assembly of the HslU/HslV complex is dependent on binding of ATP.

It localises to the cytoplasm. It catalyses the reaction ATP-dependent cleavage of peptide bonds with broad specificity.. Its activity is regulated as follows. Allosterically activated by HslU binding. Its function is as follows. Protease subunit of a proteasome-like degradation complex believed to be a general protein degrading machinery. The polypeptide is ATP-dependent protease subunit HslV (Glaesserella parasuis serovar 5 (strain SH0165) (Haemophilus parasuis)).